The sequence spans 220 residues: Protein GrpE (220 aa).

2 stretches are compositionally biased toward polar residues: residues 1–12 and 50–63; these read MEQGDKQATYNE and AASTTADPAEQTSV. Residues 1-67 form a disordered region; the sequence is MEQGDKQATY…AEQTSVEAEE (67 aa).

It belongs to the GrpE family. In terms of assembly, homodimer.

The protein localises to the cytoplasm. Participates actively in the response to hyperosmotic and heat shock by preventing the aggregation of stress-denatured proteins, in association with DnaK and GrpE. It is the nucleotide exchange factor for DnaK and may function as a thermosensor. Unfolded proteins bind initially to DnaJ; upon interaction with the DnaJ-bound protein, DnaK hydrolyzes its bound ATP, resulting in the formation of a stable complex. GrpE releases ADP from DnaK; ATP binding to DnaK triggers the release of the substrate protein, thus completing the reaction cycle. Several rounds of ATP-dependent interactions between DnaJ, DnaK and GrpE are required for fully efficient folding. The chain is Protein GrpE from Geobacillus thermodenitrificans (strain NG80-2).